The following is a 210-amino-acid chain: FMN-dependent NADH:quinone oxidoreductase 8 (210 aa).

Residues Ser10 and 16–18 (SIS) contribute to the FMN site.

It belongs to the azoreductase type 1 family. As to quaternary structure, homodimer. It depends on FMN as a cofactor.

It carries out the reaction 2 a quinone + NADH + H(+) = 2 a 1,4-benzosemiquinone + NAD(+). It catalyses the reaction N,N-dimethyl-1,4-phenylenediamine + anthranilate + 2 NAD(+) = 2-(4-dimethylaminophenyl)diazenylbenzoate + 2 NADH + 2 H(+). In terms of biological role, quinone reductase that provides resistance to thiol-specific stress caused by electrophilic quinones. Its function is as follows. Also exhibits azoreductase activity. Catalyzes the reductive cleavage of the azo bond in aromatic azo compounds to the corresponding amines. This Burkholderia lata (strain ATCC 17760 / DSM 23089 / LMG 22485 / NCIMB 9086 / R18194 / 383) protein is FMN-dependent NADH:quinone oxidoreductase 8.